A 139-amino-acid chain; its full sequence is Large ribosomal subunit protein uL16 (139 aa).

This sequence belongs to the universal ribosomal protein uL16 family. In terms of assembly, part of the 50S ribosomal subunit.

Binds 23S rRNA and is also seen to make contacts with the A and possibly P site tRNAs. The chain is Large ribosomal subunit protein uL16 from Protochlamydia amoebophila (strain UWE25).